The following is a 500-amino-acid chain: Glutamate decarboxylase 3 (500 aa).

Ser-8 carries the post-translational modification Phosphoserine. The residue at position 277 (Lys-277) is an N6-(pyridoxal phosphate)lysine.

The protein belongs to the group II decarboxylase family. In terms of assembly, homohexamer. Interacts with calmodulin. The cofactor is pyridoxal 5'-phosphate. As to expression, expressed at low levels in siliques.

It carries out the reaction L-glutamate + H(+) = 4-aminobutanoate + CO2. Catalyzes the production of GABA. The calmodulin-binding is calcium-dependent and it is proposed that this may, directly or indirectly, form a calcium regulated control of GABA biosynthesis. The chain is Glutamate decarboxylase 3 (GAD3) from Arabidopsis thaliana (Mouse-ear cress).